Reading from the N-terminus, the 228-residue chain is ATP synthase subunit beta, mitochondrial (228 aa).

A mitochondrion-targeting transit peptide spans 1–31 (MFALRAAAKADKNLLPFLGQLSRSHAAKAAK). Position 183–190 (183–190 (GGAGVGKT)) interacts with ATP.

This sequence belongs to the ATPase alpha/beta chains family. As to quaternary structure, F-type ATPases have 2 components, CF(1) - the catalytic core - and CF(0) - the membrane proton channel. CF(1) has five subunits: alpha(3), beta(3), gamma(1), delta(1), epsilon(1). CF(0) has three main subunits: a, b and c.

It localises to the mitochondrion. It is found in the mitochondrion inner membrane. It carries out the reaction ATP + H2O + 4 H(+)(in) = ADP + phosphate + 5 H(+)(out). Functionally, mitochondrial membrane ATP synthase (F(1)F(0) ATP synthase or Complex V) produces ATP from ADP in the presence of a proton gradient across the membrane which is generated by electron transport complexes of the respiratory chain. F-type ATPases consist of two structural domains, F(1) - containing the extramembraneous catalytic core, and F(0) - containing the membrane proton channel, linked together by a central stalk and a peripheral stalk. During catalysis, ATP synthesis in the catalytic domain of F(1) is coupled via a rotary mechanism of the central stalk subunits to proton translocation. Subunits alpha and beta form the catalytic core in F(1). Rotation of the central stalk against the surrounding alpha(3)beta(3) subunits leads to hydrolysis of ATP in three separate catalytic sites on the beta subunits. This Drosophila virilis (Fruit fly) protein is ATP synthase subunit beta, mitochondrial.